Consider the following 463-residue polypeptide: 3-phosphoshikimate 1-carboxyvinyltransferase (463 aa).

Positions 26, 27, and 31 each coordinate 3-phosphoshikimate. K26 lines the phosphoenolpyruvate pocket. Phosphoenolpyruvate is bound by residues G99 and R127. The 3-phosphoshikimate site is built by S163, S164, Q165, S188, D300, and K327. Residue Q165 coordinates phosphoenolpyruvate. The active-site Proton acceptor is D300. Phosphoenolpyruvate is bound by residues R331 and R372.

This sequence belongs to the EPSP synthase family. In terms of assembly, monomer.

The protein resides in the cytoplasm. The catalysed reaction is 3-phosphoshikimate + phosphoenolpyruvate = 5-O-(1-carboxyvinyl)-3-phosphoshikimate + phosphate. Its pathway is metabolic intermediate biosynthesis; chorismate biosynthesis; chorismate from D-erythrose 4-phosphate and phosphoenolpyruvate: step 6/7. Catalyzes the transfer of the enolpyruvyl moiety of phosphoenolpyruvate (PEP) to the 5-hydroxyl of shikimate-3-phosphate (S3P) to produce enolpyruvyl shikimate-3-phosphate and inorganic phosphate. The chain is 3-phosphoshikimate 1-carboxyvinyltransferase from Burkholderia pseudomallei (Pseudomonas pseudomallei).